A 513-amino-acid polypeptide reads, in one-letter code: MALSQYTSLSTELVLATAIFCIVFWVARALRTQVPKGLKTPPGPWGLPILGHVLTLGKNPHLSLTKLSKQYGDVLQIRIGSTPVVVLSGLDTIRQALVRQGDDFKGRPDLYSFTLITNGKSMTFNPDCGPVWAARRRLAQDALKSFSIASDPTSASSCYLEDHVIKEANHLVSKLQKLTAEVGHFEPVNQVVESVANVIGAMCFGKNFPRKSEEMLRIVKGSSDFVENVSSGNAVDFFPILRYLPNPDLKRFKNFNDNFVLFLQKTVQEHYQDFNKNSIQDITGALFKHSENSKDSGGLIPQEKIVNIVNDLFGAGFDTVTTAITLSILLLVTWPNVQRKIHKELDTVIGRDRQPRLSDRLQLPYMEAFILELYRYTSFVPFTIPHSTTRDTSLNGFYIPKDRCIFINQWQVNHDEKQWKDPFVFRPERFLTDNDTVINKTLSEKVMLFGLGKRRCIGEIPAKWEVFLFLAILLQQLEFSVPPGTKVDLTPTYGLTMKPQTCKYIQAWPRFSK.

An O-linked (GlcNAc) serine glycan is attached at Ser-68. Phe-225 contacts substrate. Position 456 (Cys-456) interacts with heme.

The protein belongs to the cytochrome P450 family. Interacts with PGRMC1; the interaction requires PGRMC1 homodimerization. Heme is required as a cofactor. As to expression, found in lung and liver.

It is found in the endoplasmic reticulum membrane. Its subcellular location is the microsome membrane. It catalyses the reaction an organic molecule + reduced [NADPH--hemoprotein reductase] + O2 = an alcohol + oxidized [NADPH--hemoprotein reductase] + H2O + H(+). The enzyme catalyses 17beta-estradiol + reduced [NADPH--hemoprotein reductase] + O2 = 2-hydroxy-17beta-estradiol + oxidized [NADPH--hemoprotein reductase] + H2O + H(+). It carries out the reaction 17beta-estradiol + reduced [NADPH--hemoprotein reductase] + O2 = 4-hydroxy-17beta-estradiol + oxidized [NADPH--hemoprotein reductase] + H2O + H(+). The catalysed reaction is estrone + reduced [NADPH--hemoprotein reductase] + O2 = 2-hydroxyestrone + oxidized [NADPH--hemoprotein reductase] + H2O + H(+). It catalyses the reaction estrone + reduced [NADPH--hemoprotein reductase] + O2 = 4-hydroxyestrone + oxidized [NADPH--hemoprotein reductase] + H2O + H(+). The enzyme catalyses cholesterol + reduced [NADPH--hemoprotein reductase] + O2 = 25-hydroxycholesterol + oxidized [NADPH--hemoprotein reductase] + H2O + H(+). It carries out the reaction all-trans-retinol + reduced [NADPH--hemoprotein reductase] + O2 = all-trans-retinal + oxidized [NADPH--hemoprotein reductase] + 2 H2O + H(+). The catalysed reaction is all-trans-retinal + reduced [NADPH--hemoprotein reductase] + O2 = all-trans-retinoate + oxidized [NADPH--hemoprotein reductase] + H2O + 2 H(+). It catalyses the reaction (5Z,8Z,11Z,14Z)-eicosatetraenoate + reduced [NADPH--hemoprotein reductase] + O2 = (14R,15S)-epoxy-(5Z,8Z,11Z)-eicosatrienoate + oxidized [NADPH--hemoprotein reductase] + H2O + H(+). The enzyme catalyses (5Z,8Z,11Z,14Z)-eicosatetraenoate + reduced [NADPH--hemoprotein reductase] + O2 = (14S,15R)-epoxy-(5Z,8Z,11Z)-eicosatrienoate + oxidized [NADPH--hemoprotein reductase] + H2O + H(+). It carries out the reaction (5Z,8Z,11Z,14Z,17Z)-eicosapentaenoate + reduced [NADPH--hemoprotein reductase] + O2 = (17R,18S)-epoxy-(5Z,8Z,11Z,14Z)-eicosatetraenoate + oxidized [NADPH--hemoprotein reductase] + H2O + H(+). The catalysed reaction is (4Z,7Z,10Z,13Z,16Z,19Z)-docosahexaenoate + reduced [NADPH--hemoprotein reductase] + O2 = (19R,20S)-epoxy-(4Z,7Z,10Z,13Z,16Z)-docosapentaenoate + oxidized [NADPH--hemoprotein reductase] + H2O + H(+). It catalyses the reaction (5S)-hydroperoxy-(6E,8Z,11Z,14Z)-eicosatetraenoate = 5-oxo-(6E,8Z,11Z,14Z)-eicosatetraenoate + H2O. The enzyme catalyses (12S)-hydroperoxy-(5Z,8Z,10E,14Z)-eicosatetraenoate = 12-oxo-(5Z,8Z,10E,14Z)-eicosatetraenoate + H2O. It carries out the reaction (15S)-hydroperoxy-(5Z,8Z,11Z,13E)-eicosatetraenoate = 15-oxo-(5Z,8Z,11Z,13E)-eicosatetraenoate + H2O. The catalysed reaction is (13S)-hydroperoxy-(9Z,11E)-octadecadienoate = 13-oxo-(9Z,11E)-octadecadienoate + H2O. It catalyses the reaction (5Z,8Z,11Z,14Z)-eicosatetraenoate + reduced [NADPH--hemoprotein reductase] + O2 = 13-hydroxy-(5Z,8Z,11Z,14Z)-eicosatetraenoate + oxidized [NADPH--hemoprotein reductase] + H2O + H(+). The enzyme catalyses (5Z,8Z,11Z,14Z)-eicosatetraenoate + reduced [NADPH--hemoprotein reductase] + O2 = 19-hydroxy-(5Z,8Z,11Z,14Z)-eicosatetraenoate + oxidized [NADPH--hemoprotein reductase] + H2O + H(+). It carries out the reaction (9Z,12Z)-octadecadienoate + reduced [NADPH--hemoprotein reductase] + O2 = 11-hydroxy-(9Z,12Z)-octadecadienoate + oxidized [NADPH--hemoprotein reductase] + H2O + H(+). The protein operates within cofactor metabolism; retinol metabolism. Its pathway is steroid metabolism; cholesterol metabolism. It participates in lipid metabolism; arachidonate metabolism. Its function is as follows. A cytochrome P450 monooxygenase involved in the metabolism of various endogenous substrates, including fatty acids, steroid hormones and vitamins. Mechanistically, uses molecular oxygen inserting one oxygen atom into a substrate, and reducing the second into a water molecule, with two electrons provided by NADPH via cytochrome P450 reductase (NADPH--hemoprotein reductase). Catalyzes the hydroxylation of carbon-hydrogen bonds. Exhibits high catalytic activity for the formation of hydroxyestrogens from estrone (E1) and 17beta-estradiol (E2), namely 2-hydroxy E1 and E2. Metabolizes cholesterol toward 25-hydroxycholesterol, a physiological regulator of cellular cholesterol homeostasis. May act as a major enzyme for all-trans retinoic acid biosynthesis in the liver. Catalyzes two successive oxidative transformation of all-trans retinol to all-trans retinal and then to the active form all-trans retinoic acid. Primarily catalyzes stereoselective epoxidation of the last double bond of polyunsaturated fatty acids (PUFA), displaying a strong preference for the (R,S) stereoisomer. Catalyzes bisallylic hydroxylation and omega-1 hydroxylation of PUFA. May also participate in eicosanoids metabolism by converting hydroperoxide species into oxo metabolites (lipoxygenase-like reaction, NADPH-independent). Plays a role in the oxidative metabolism of xenobiotics. Catalyzes the N-hydroxylation of heterocyclic amines and the O-deethylation of phenacetin. Metabolizes caffeine via N3-demethylation. The sequence is that of Cytochrome P450 1A2 (CYP1A2) from Mesocricetus auratus (Golden hamster).